A 362-amino-acid polypeptide reads, in one-letter code: Cytochrome c oxidase subunit 2 (362 aa).

The signal sequence occupies residues 1 to 28 (MEQQEKRGTVRKALLGSVIGFGGLALAG). C29 carries N-palmitoyl cysteine lipidation. The S-diacylglycerol cysteine moiety is linked to residue C29. 2 helical membrane passes run 60 to 80 (FWVWVWVTAWIIGFIMWGLFI) and 107 to 127 (IPLELVLTIVPIIIVMALFFF). Positions 171-206 (SDYVGTDEKRQEAAEKTKFDQGGDNPNPINGRSKTD) are disordered. A compositionally biased stretch (basic and acidic residues) spans 176 to 191 (TDEKRQEAAEKTKFDQ). Polar residues predominate over residues 197 to 206 (NPINGRSKTD). The Cu cation site is built by H246, C287, E289, C291, H295, and M298. Residues 325–362 (NSDALKSIGEAPYATSTHPFNSERATRDGANFDDTAAA) are disordered.

This sequence belongs to the cytochrome c oxidase subunit 2 family. In terms of assembly, associates with subunits I, III and IV to form cytochrome c oxidase. Binuclear copper center (CuA) serves as cofactor.

The protein localises to the cell membrane. The catalysed reaction is 4 Fe(II)-[cytochrome c] + O2 + 8 H(+)(in) = 4 Fe(III)-[cytochrome c] + 2 H2O + 4 H(+)(out). Subunits I and II form the functional core of the enzyme complex. Electrons originating in cytochrome c are transferred via heme a and Cu(A) to the binuclear center formed by heme a3 and Cu(B). The chain is Cytochrome c oxidase subunit 2 (ctaC) from Corynebacterium diphtheriae (strain ATCC 700971 / NCTC 13129 / Biotype gravis).